We begin with the raw amino-acid sequence, 154 residues long: Transcriptional repressor NrdR (154 aa).

Residues 3 to 34 (CPTCKYNGTRVVDSRPADDGNSIRRRRECEKC) fold into a zinc finger. The ATP-cone domain maps to 49-139 (LIVVKKDGAR…VYRQFKDISV (91 aa)).

This sequence belongs to the NrdR family. It depends on Zn(2+) as a cofactor.

Its function is as follows. Negatively regulates transcription of bacterial ribonucleotide reductase nrd genes and operons by binding to NrdR-boxes. This is Transcriptional repressor NrdR from Listeria innocua serovar 6a (strain ATCC BAA-680 / CLIP 11262).